A 255-amino-acid polypeptide reads, in one-letter code: Thiazole synthase (255 aa).

Residue Lys95 is the Schiff-base intermediate with DXP of the active site. 1-deoxy-D-xylulose 5-phosphate is bound by residues Gly156, 182-183 (AG), and 204-205 (NT).

It belongs to the ThiG family. In terms of assembly, homotetramer. Forms heterodimers with either ThiH or ThiS.

It localises to the cytoplasm. The enzyme catalyses [ThiS sulfur-carrier protein]-C-terminal-Gly-aminoethanethioate + 2-iminoacetate + 1-deoxy-D-xylulose 5-phosphate = [ThiS sulfur-carrier protein]-C-terminal Gly-Gly + 2-[(2R,5Z)-2-carboxy-4-methylthiazol-5(2H)-ylidene]ethyl phosphate + 2 H2O + H(+). It participates in cofactor biosynthesis; thiamine diphosphate biosynthesis. Its function is as follows. Catalyzes the rearrangement of 1-deoxy-D-xylulose 5-phosphate (DXP) to produce the thiazole phosphate moiety of thiamine. Sulfur is provided by the thiocarboxylate moiety of the carrier protein ThiS. In vitro, sulfur can be provided by H(2)S. The protein is Thiazole synthase of Vibrio parahaemolyticus serotype O3:K6 (strain RIMD 2210633).